Consider the following 245-residue polypeptide: MSEWSRIAVEFGEQQLNLTELEDFARELAYEGLDPALIIKKLKETGGDDWVKDTKFIIVFALTRGNKIVKASGKMSNSGSKRLMALQEKYGLVERAETRLSITPVRVAQSLPTWTCAAAAALKEYLPVGPAVMNLKVENYPPEMMCMAFGSLIPTAGVSEATTKTLMEAYSLWQDAFTKTINVKMRGASKTEVYNSFRDPLHAAVNSVFFPNDVRVKWLKAKGILGPDGVPSRAAEVAAAAYRNL.

5 residues coordinate RNA: Tyr30, Lys67, Arg106, Arg186, and Ser196.

It belongs to the phlebovirus nucleocapsid protein family. As to quaternary structure, homodimer. Homohexamer; ring-shaped, necessary to form the nucleocapsid. Homopentamers; opened pentamers in solution. Binds to viral genomic RNA. Interacts with glycoprotein Gn; this interaction allows packaging of nucleocapsids into virions.

The protein resides in the virion. It is found in the host cytoplasm. It localises to the host nucleus. Its subcellular location is the host endoplasmic reticulum-Golgi intermediate compartment. The protein localises to the host Golgi apparatus. Encapsidates the genomic RNA, protecting it from nucleases. Displays high affinity for single-stranded nucleic acid. The encapsidated genomic RNA is termed the nucleocapsid (NC) or ribonucleoprotein. The ribonucleoprotein has a non-helical structure. Serves as template for viral transcription and replication. After replication, the nucleocapsid is recruited to the host Golgi apparatus by glycoprotein Gn for packaging into virus particles. This is Nucleoprotein (NP) from Dabie bandavirus (Severe fever with thrombocytopenia virus).